Consider the following 134-residue polypeptide: Viral interleukin-8 homolog (134 aa).

The signal sequence occupies residues 1 to 22 (MQALLLVLVLFIVQIYLLPGNG).

The protein belongs to the intercrine alpha (chemokine CxC) family. As to quaternary structure, homodimer.

It is found in the secreted. Its function is as follows. Plays a role in the early phase of cytolytic infections presumably by recruiting host B or T-lymphocytes. This is Viral interleukin-8 homolog (MDV078) from Gallus gallus (Chicken).